We begin with the raw amino-acid sequence, 306 residues long: MEKGNQSTVNKFFLSGLTEQPELQLPLFLLFLGIYLLTVLGNLGMIILILLSSYLHTPMYFFLSSLSFIDFCQSTVITPKMLVKFVREKNEISYPECITQLCFFVIFAVSESYMLAAMAYDRYVAICSPLLYSSIMSQHKCLSLVLGVYILGIVCASAHVGCIFRIDFCKSDLINHYFCDLISILNLSCSNIFVNDLVILIFSLINTIFPTLTILSSYAFIIISILRIKSTEGRSKAFSTCSSHISAVAIFYISAGFTYLNPSSSHSMDEGKVSSIFYTIIVPMLNPLIYSLRNKDVKIALKKMIE.

The Extracellular portion of the chain corresponds to 1 to 28 (MEKGNQSTVNKFFLSGLTEQPELQLPLF). Asn-5 carries N-linked (GlcNAc...) asparagine glycosylation. Residues 29-49 (LLFLGIYLLTVLGNLGMIILI) traverse the membrane as a helical segment. Residues 50–56 (LLSSYLH) lie on the Cytoplasmic side of the membrane. A helical transmembrane segment spans residues 57-77 (TPMYFFLSSLSFIDFCQSTVI). Residues 78-97 (TPKMLVKFVREKNEISYPEC) are Extracellular-facing. A helical membrane pass occupies residues 98–118 (ITQLCFFVIFAVSESYMLAAM). The Cytoplasmic segment spans residues 119–143 (AYDRYVAICSPLLYSSIMSQHKCLS). A helical membrane pass occupies residues 144–164 (LVLGVYILGIVCASAHVGCIF). Topologically, residues 165–196 (RIDFCKSDLINHYFCDLISILNLSCSNIFVND) are extracellular. A helical membrane pass occupies residues 197-217 (LVILIFSLINTIFPTLTILSS). Residues 218–236 (YAFIIISILRIKSTEGRSK) are Cytoplasmic-facing. Residues 237-257 (AFSTCSSHISAVAIFYISAGF) form a helical membrane-spanning segment. The Extracellular portion of the chain corresponds to 258–271 (TYLNPSSSHSMDEG). The helical transmembrane segment at 272–292 (KVSSIFYTIIVPMLNPLIYSL) threads the bilayer. The Cytoplasmic segment spans residues 293–306 (RNKDVKIALKKMIE).

The protein belongs to the G-protein coupled receptor 1 family.

Its subcellular location is the cell membrane. Odorant receptor. This is Olfactory receptor 8G17 from Mus musculus (Mouse).